We begin with the raw amino-acid sequence, 536 residues long: CTP synthase (536 aa).

The segment at 1–268 (MKSKFIFITG…GKVLCKLFNI (268 aa)) is amidoligase domain. Ser-14 provides a ligand contact to CTP. Ser-14 lines the UTP pocket. 15 to 20 (SLGKGL) lines the ATP pocket. An L-glutamine-binding site is contributed by Tyr-55. Residue Asp-72 participates in ATP binding. Positions 72 and 142 each coordinate Mg(2+). CTP contacts are provided by residues 149 to 151 (DIE), 189 to 194 (KTKPMQ), and Lys-225. Residues 189-194 (KTKPMQ) and Lys-225 contribute to the UTP site. The Glutamine amidotransferase type-1 domain occupies 293–535 (TIALVGKYVE…IKAAVDNKIN (243 aa)). Gly-356 serves as a coordination point for L-glutamine. The Nucleophile; for glutamine hydrolysis role is filled by Cys-383. L-glutamine-binding positions include 384–387 (LGMQ), Glu-407, and Arg-463. Active-site residues include His-508 and Glu-510.

It belongs to the CTP synthase family. In terms of assembly, homotetramer.

The enzyme catalyses UTP + L-glutamine + ATP + H2O = CTP + L-glutamate + ADP + phosphate + 2 H(+). It catalyses the reaction L-glutamine + H2O = L-glutamate + NH4(+). The catalysed reaction is UTP + NH4(+) + ATP = CTP + ADP + phosphate + 2 H(+). It participates in pyrimidine metabolism; CTP biosynthesis via de novo pathway; CTP from UDP: step 2/2. Its activity is regulated as follows. Allosterically activated by GTP, when glutamine is the substrate; GTP has no effect on the reaction when ammonia is the substrate. The allosteric effector GTP functions by stabilizing the protein conformation that binds the tetrahedral intermediate(s) formed during glutamine hydrolysis. Inhibited by the product CTP, via allosteric rather than competitive inhibition. Its function is as follows. Catalyzes the ATP-dependent amination of UTP to CTP with either L-glutamine or ammonia as the source of nitrogen. Regulates intracellular CTP levels through interactions with the four ribonucleotide triphosphates. This Treponema denticola (strain ATCC 35405 / DSM 14222 / CIP 103919 / JCM 8153 / KCTC 15104) protein is CTP synthase.